The sequence spans 461 residues: Porin AaxA (461 aa).

Residues 1–22 (MSFRSILLTALLSLSFTNTMQA) form the signal peptide.

It belongs to the OprB family.

The protein localises to the cell outer membrane. Facilitates L-arginine uptake, as part of the AaxABC system. The arginine uptake by the bacterium in the macrophage may be a virulence factor against the host innate immune response. The protein is Porin AaxA (aaxA) of Chlamydia muridarum (strain MoPn / Nigg).